Here is a 400-residue protein sequence, read N- to C-terminus: Beta-ketoadipyl-CoA thiolase (400 aa).

The Acyl-thioester intermediate role is filled by C90. Residues H356 and C386 each act as proton acceptor in the active site.

Belongs to the thiolase-like superfamily. Thiolase family.

The enzyme catalyses succinyl-CoA + acetyl-CoA = 3-oxoadipyl-CoA + CoA. Its pathway is aromatic compound metabolism; beta-ketoadipate pathway; acetyl-CoA and succinyl-CoA from 3-oxoadipate: step 2/2. In terms of biological role, catalyzes thiolytic cleavage of beta-ketoadipyl-CoA to succinyl-CoA and acetyl-CoA. This is Beta-ketoadipyl-CoA thiolase (pcaF) from Pseudomonas putida (Arthrobacter siderocapsulatus).